Reading from the N-terminus, the 162-residue chain is Phosphopantetheine adenylyltransferase (162 aa).

A substrate-binding site is contributed by threonine 10. ATP is bound by residues 10–11 and histidine 18; that span reads TF. Positions 42, 74, and 88 each coordinate substrate. ATP-binding positions include 89-91, glutamate 99, and 124-130; these read GLR and FSCISST.

It belongs to the bacterial CoaD family. As to quaternary structure, homohexamer. The cofactor is Mg(2+).

It is found in the cytoplasm. The enzyme catalyses (R)-4'-phosphopantetheine + ATP + H(+) = 3'-dephospho-CoA + diphosphate. Its pathway is cofactor biosynthesis; coenzyme A biosynthesis; CoA from (R)-pantothenate: step 4/5. Its function is as follows. Reversibly transfers an adenylyl group from ATP to 4'-phosphopantetheine, yielding dephospho-CoA (dPCoA) and pyrophosphate. This chain is Phosphopantetheine adenylyltransferase, found in Francisella tularensis subsp. novicida (strain U112).